The primary structure comprises 598 residues: Autophagy-related protein 22-1 (598 aa).

The segment at 1–20 is disordered; the sequence is MEDGGAGLRAPRYPAEDTSP. Residues 28-48 form a helical membrane-spanning segment; sequence GFFCYGLAAEVFAVCAVGSFL. Asn-74 and Asn-80 each carry an N-linked (GlcNAc...) asparagine glycan. A run of 3 helical transmembrane segments spans residues 111-131, 159-179, and 182-202; these read SFAM…LVSV, FLLV…ICVV, and GCSF…HPVV. Residues 207-238 form a disordered region; it reads DHPTASSSIPLQPISPQRSSRKSEESLHQVNR. Positions 212-224 are enriched in low complexity; that stretch reads SSSIPLQPISPQR. A compositionally biased stretch (basic and acidic residues) spans 227-238; that stretch reads RKSEESLHQVNR. The helical transmembrane segment at 263–283 threads the bilayer; sequence VGIGYMAAVSVQVICILILYI. Asn-285 carries an N-linked (GlcNAc...) asparagine glycan. 7 consecutive transmembrane segments (helical) span residues 297-317, 363-383, 400-420, 431-451, 465-485, 489-509, and 534-554; these read TVLF…VMWL, VLLF…ISAT, ALLS…WPII, IIVC…LGFL, WYEI…LSSY, FYGL…FAIT, and AFGF…MVDV. The disordered stretch occupies residues 575–598; it reads HEDFESFEGSSDGHEAEGLMRDHD. A compositionally biased stretch (basic and acidic residues) spans 585-598; the sequence is SDGHEAEGLMRDHD.

It belongs to the ATG22 family.

The protein resides in the vacuole membrane. Vacuolar effluxer which mediate the efflux of amino acids resulting from autophagic degradation. The release of autophagic amino acids allows the maintenance of protein synthesis and viability during nitrogen starvation. This chain is Autophagy-related protein 22-1 (atg22-1), found in Sclerotinia sclerotiorum (strain ATCC 18683 / 1980 / Ss-1) (White mold).